The primary structure comprises 227 residues: UPF0173 metal-dependent hydrolase BCE33L4354 (227 aa).

The protein belongs to the UPF0173 family.

The sequence is that of UPF0173 metal-dependent hydrolase BCE33L4354 from Bacillus cereus (strain ZK / E33L).